A 50-amino-acid polypeptide reads, in one-letter code: Large ribosomal subunit protein bL33 (50 aa).

The protein belongs to the bacterial ribosomal protein bL33 family.

This is Large ribosomal subunit protein bL33 from Mycoplasmopsis synoviae (strain 53) (Mycoplasma synoviae).